Reading from the N-terminus, the 212-residue chain is MKQLFRQWYDLSEIKKELTTRNWFPATSGNISIKVSHEPLTFLITASGKDKTKTTPDDFLLVDHVGVPVLETELRPSAETILHTHIYNNTNAGCVLHVHTTDNNVITNLYSDAVTLQNQEIIKALDIWEEGATIHIPIIENHAHIPTLGENFRKHIQGDSGAVLIRNHGITVWGRDSFDAKKRLEAYEFLFQFHIKLLSIQGGVSNGANSYS.

Zn(2+) is bound by residues histidine 97 and histidine 99.

It belongs to the aldolase class II family. MtnB subfamily. As to quaternary structure, homotetramer. Zn(2+) is required as a cofactor.

The enzyme catalyses 5-(methylsulfanyl)-D-ribulose 1-phosphate = 5-methylsulfanyl-2,3-dioxopentyl phosphate + H2O. The protein operates within amino-acid biosynthesis; L-methionine biosynthesis via salvage pathway; L-methionine from S-methyl-5-thio-alpha-D-ribose 1-phosphate: step 2/6. Functionally, catalyzes the dehydration of methylthioribulose-1-phosphate (MTRu-1-P) into 2,3-diketo-5-methylthiopentyl-1-phosphate (DK-MTP-1-P). The protein is Methylthioribulose-1-phosphate dehydratase of Bacillus cereus (strain B4264).